Consider the following 766-residue polypeptide: Phosphoribosylformylglycinamidine synthase subunit PurL (766 aa).

H66 is an active-site residue. Residues Y69 and K113 each coordinate ATP. E115 serves as a coordination point for Mg(2+). Substrate is bound by residues 116–119 and R138; that span reads SHNH. H117 serves as the catalytic Proton acceptor. D139 lines the Mg(2+) pocket. Position 264 (Q264) interacts with substrate. D292 serves as a coordination point for Mg(2+). Residue 336 to 338 participates in substrate binding; it reads ESQ. The ATP site is built by N524 and G561. N562 serves as a coordination point for Mg(2+). Position 564 (S564) interacts with substrate.

This sequence belongs to the FGAMS family. In terms of assembly, monomer. Part of the FGAM synthase complex composed of 1 PurL, 1 PurQ and 2 PurS subunits.

It is found in the cytoplasm. It carries out the reaction N(2)-formyl-N(1)-(5-phospho-beta-D-ribosyl)glycinamide + L-glutamine + ATP + H2O = 2-formamido-N(1)-(5-O-phospho-beta-D-ribosyl)acetamidine + L-glutamate + ADP + phosphate + H(+). It functions in the pathway purine metabolism; IMP biosynthesis via de novo pathway; 5-amino-1-(5-phospho-D-ribosyl)imidazole from N(2)-formyl-N(1)-(5-phospho-D-ribosyl)glycinamide: step 1/2. In terms of biological role, part of the phosphoribosylformylglycinamidine synthase complex involved in the purines biosynthetic pathway. Catalyzes the ATP-dependent conversion of formylglycinamide ribonucleotide (FGAR) and glutamine to yield formylglycinamidine ribonucleotide (FGAM) and glutamate. The FGAM synthase complex is composed of three subunits. PurQ produces an ammonia molecule by converting glutamine to glutamate. PurL transfers the ammonia molecule to FGAR to form FGAM in an ATP-dependent manner. PurS interacts with PurQ and PurL and is thought to assist in the transfer of the ammonia molecule from PurQ to PurL. This is Phosphoribosylformylglycinamidine synthase subunit PurL from Mycobacterium tuberculosis (strain CDC 1551 / Oshkosh).